The primary structure comprises 295 residues: Small ribosomal subunit protein uS2 (295 aa).

N-acetylserine is present on serine 2. A Phosphoserine modification is found at serine 43. Position 52 is an N6-acetyllysine (lysine 52). The segment at 54–113 (TWEKLLLAARAIVAIENPADVSVISSRNTGQRAVLKFAAATGATPIAGRFTPGTFTNQIQ) is interaction with PPP1R16B. Lysine 89 bears the N6-acetyllysine; alternate mark. Lysine 89 is covalently cross-linked (Glycyl lysine isopeptide (Lys-Gly) (interchain with G-Cter in SUMO2); alternate). Threonine 97 bears the Phosphothreonine mark. Laminin-binding regions lie at residues 161-180 (IPCN…MLAR) and 205-229 (RDPE…EFQG). [DE]-W-[ST] repeat units lie at residues 230–232 (EWT), 247–249 (DWS), 266–268 (DWS), 275–277 (DWS), and 293–295 (EWS). Residues 242–295 (QPEVADWSEGVQVPSVPIQQFPTEDWSAQPATEDWSAAPTAQATEWVGTTTEWS) form a laminin-binding region. Residues 266–295 (DWSAQPATEDWSAAPTAQATEWVGTTTEWS) are disordered. A compositionally biased stretch (polar residues) spans 280 to 295 (PTAQATEWVGTTTEWS).

This sequence belongs to the universal ribosomal protein uS2 family. Monomer (37LRP) and homodimer (67LR). Component of the small ribosomal subunit. Mature ribosomes consist of a small (40S) and a large (60S) subunit. The 40S subunit contains about 33 different proteins and 1 molecule of RNA (18S). The 60S subunit contains about 49 different proteins and 3 molecules of RNA (28S, 5.8S and 5S). Interacts with RPS21. Interacts with several laminins including at least LAMB1. Interacts with MDK. The mature dimeric form interacts with PPP1R16B (via its fourth ankyrin repeat). Interacts with PPP1CA only in the presence of PPP1R16B. Acylated. Acylation may be a prerequisite for conversion of the monomeric 37 kDa laminin receptor precursor (37LRP) to the mature dimeric 67 kDa laminin receptor (67LR), and may provide a mechanism for membrane association. Post-translationally, cleaved by stromelysin-3 (ST3) at the cell surface. Cleavage by stromelysin-3 may be a mechanism to alter cell-extracellular matrix interactions.

It localises to the cell membrane. Its subcellular location is the cytoplasm. It is found in the nucleus. Required for the assembly and/or stability of the 40S ribosomal subunit. Required for the processing of the 20S rRNA-precursor to mature 18S rRNA in a late step of the maturation of 40S ribosomal subunits. Also functions as a cell surface receptor for laminin. Plays a role in cell adhesion to the basement membrane and in the consequent activation of signaling transduction pathways. May play a role in cell fate determination and tissue morphogenesis. Also acts as a receptor for several other ligands, including the pathogenic prion protein, viruses, and bacteria. Acts as a PPP1R16B-dependent substrate of PPP1CA. The chain is Small ribosomal subunit protein uS2 from Oryctolagus cuniculus (Rabbit).